The chain runs to 269 residues: Expansin-B9 (269 aa).

The first 24 residues, 1–24 (MGSLANNIMVVGAVLAALVVGGSC), serve as a signal peptide directing secretion. A glycan (N-linked (GlcNAc...) asparagine) is linked at Asn-34. The Expansin-like EG45 domain occupies 63–169 (GGACGIKNVN…RRVRCKYPAG (107 aa)). 3 cysteine pairs are disulfide-bonded: Cys-66–Cys-94, Cys-97–Cys-164, and Cys-102–Cys-108. One can recognise an Expansin-like CBD domain in the interval 183-264 (NYVAVLVKFV…NWRPDAVYTS (82 aa)).

Belongs to the expansin family. Expansin B subfamily. In terms of tissue distribution, expressed in anthers and pollen.

It localises to the secreted. The protein localises to the cell wall. It is found in the membrane. Functionally, may aid fertilization by loosening the cell wall of the stigma and style, thereby facilitating penetration of the pollen tube. Acts selectively on grass cell walls, which are relatively poor in pectins and xyloglucans and rich in glucuronoarabinoxylans and (1-3),(1-4)-beta-D-glucans, when compared with cell walls of other angiosperms, including other monocots. This is Expansin-B9 (EXPB9) from Zea mays (Maize).